Consider the following 337-residue polypeptide: Glyceraldehyde-3-phosphate dehydrogenase 3 (337 aa).

Residues 12 to 13 (RM) and Lys80 contribute to the NAD(+) site. D-glyceraldehyde 3-phosphate contacts are provided by residues 152 to 154 (SCT) and Thr183. Residue Cys153 is the Nucleophile of the active site. An NAD(+)-binding site is contributed by Asn184. Residues Arg198, 211–212 (TG), and Arg234 contribute to the D-glyceraldehyde 3-phosphate site. Asn317 is a binding site for NAD(+).

It belongs to the glyceraldehyde-3-phosphate dehydrogenase family. Homotetramer.

Its subcellular location is the cytoplasm. The enzyme catalyses D-glyceraldehyde 3-phosphate + phosphate + NAD(+) = (2R)-3-phospho-glyceroyl phosphate + NADH + H(+). It participates in carbohydrate degradation; glycolysis; pyruvate from D-glyceraldehyde 3-phosphate: step 1/5. It functions in the pathway carbohydrate biosynthesis; gluconeogenesis. Its function is as follows. Catalyzes the oxidative phosphorylation of glyceraldehyde 3-phosphate (G3P) to 1,3-bisphosphoglycerate (BPG) using the cofactor NAD. The first reaction step involves the formation of a hemiacetal intermediate between G3P and a cysteine residue, and this hemiacetal intermediate is then oxidized to a thioester, with concomitant reduction of NAD to NADH. The reduced NADH is then exchanged with the second NAD, and the thioester is attacked by a nucleophilic inorganic phosphate to produce BPG. This is Glyceraldehyde-3-phosphate dehydrogenase 3 (gap3) from Nostoc sp. (strain PCC 7120 / SAG 25.82 / UTEX 2576).